The following is a 148-amino-acid chain: MPKLLLLHGPNLNRLGTREPERYGRLTLQDIETRLRSICDAAGVQLCSAQSNHEGELIDRIHAAADEGVEFIVINPAALTHTSVGLRDALLAVALPFIEVHLSNVHAREAFRQHSYLSDIAEGVITGLGADGYDFAARAAIRRMGGQA.

Catalysis depends on tyrosine 23, which acts as the Proton acceptor. 3 residues coordinate substrate: asparagine 75, histidine 81, and aspartate 88. Histidine 101 (proton donor) is an active-site residue. Residues 102 to 103 (LS) and arginine 112 each bind substrate.

Belongs to the type-II 3-dehydroquinase family. Homododecamer.

It carries out the reaction 3-dehydroquinate = 3-dehydroshikimate + H2O. Its pathway is metabolic intermediate biosynthesis; chorismate biosynthesis; chorismate from D-erythrose 4-phosphate and phosphoenolpyruvate: step 3/7. Catalyzes a trans-dehydration via an enolate intermediate. This chain is 3-dehydroquinate dehydratase, found in Halorhodospira halophila (strain DSM 244 / SL1) (Ectothiorhodospira halophila (strain DSM 244 / SL1)).